A 317-amino-acid chain; its full sequence is Glycine--tRNA ligase alpha subunit (317 aa).

It belongs to the class-II aminoacyl-tRNA synthetase family. Tetramer of two alpha and two beta subunits.

Its subcellular location is the cytoplasm. It carries out the reaction tRNA(Gly) + glycine + ATP = glycyl-tRNA(Gly) + AMP + diphosphate. This chain is Glycine--tRNA ligase alpha subunit, found in Leptothrix cholodnii (strain ATCC 51168 / LMG 8142 / SP-6) (Leptothrix discophora (strain SP-6)).